The primary structure comprises 285 residues: MFNWVKTAMLMAAITALFIVIGGMIGGSRGMTIALLFALGMNFFSYWFSDKMVLRMYNAQEVDENTAPQFYRMVRELATRANLPMPRVYLINEDAPNAFATGRNPEHAAVAATTGILRVLSEREMRGVMAHELAHVKHRDILISTITATMAGAISAIANFAMFFGGRDENGRPANPIAGIAVALLAPIAGALIQMAISRAREFEADRGGAQISGDPQSLATALDKIHRYAAGIPFQAAEQHPATAQMMIMNPLHGGGLQNLFSTHPATEERIARLMEMARTGRFD.

The next 2 helical transmembrane spans lie at 7 to 27 and 30 to 50; these read TAML…MIGG and GMTI…WFSD. His-131 is a Zn(2+) binding site. Glu-132 is a catalytic residue. His-135 is a Zn(2+) binding site. The next 2 membrane-spanning stretches (helical) occupy residues 146–166 and 177–197; these read ITAT…FFGG and IAGI…QMAI. Glu-202 contacts Zn(2+).

Belongs to the peptidase M48B family. Requires Zn(2+) as cofactor.

The protein localises to the cell inner membrane. This is Protease HtpX homolog from Burkholderia lata (strain ATCC 17760 / DSM 23089 / LMG 22485 / NCIMB 9086 / R18194 / 383).